Consider the following 448-residue polypeptide: ATP-dependent protease ATPase subunit HslU (448 aa).

Residues isoleucine 23, 65–70 (GIGKTE), aspartate 263, glutamate 327, and arginine 399 each bind ATP.

This sequence belongs to the ClpX chaperone family. HslU subfamily. As to quaternary structure, a double ring-shaped homohexamer of HslV is capped on each side by a ring-shaped HslU homohexamer. The assembly of the HslU/HslV complex is dependent on binding of ATP.

The protein resides in the cytoplasm. ATPase subunit of a proteasome-like degradation complex; this subunit has chaperone activity. The binding of ATP and its subsequent hydrolysis by HslU are essential for unfolding of protein substrates subsequently hydrolyzed by HslV. HslU recognizes the N-terminal part of its protein substrates and unfolds these before they are guided to HslV for hydrolysis. This Borreliella burgdorferi (strain ATCC 35210 / DSM 4680 / CIP 102532 / B31) (Borrelia burgdorferi) protein is ATP-dependent protease ATPase subunit HslU.